Reading from the N-terminus, the 351-residue chain is Dihydroorotate dehydrogenase (quinone) (351 aa).

Residues 61–65 (AGLDK) and T85 each bind FMN. Position 65 (K65) interacts with substrate. 110–114 (NRMGF) serves as a coordination point for substrate. 2 residues coordinate FMN: N139 and N172. N172 serves as a coordination point for substrate. S175 acts as the Nucleophile in catalysis. Position 177 (N177) interacts with substrate. FMN-binding residues include K217 and T245. 246 to 247 (NT) contacts substrate. FMN-binding positions include G268, G297, and 318-319 (YS).

It belongs to the dihydroorotate dehydrogenase family. Type 2 subfamily. Monomer. FMN is required as a cofactor.

The protein localises to the cell membrane. The catalysed reaction is (S)-dihydroorotate + a quinone = orotate + a quinol. The protein operates within pyrimidine metabolism; UMP biosynthesis via de novo pathway; orotate from (S)-dihydroorotate (quinone route): step 1/1. Catalyzes the conversion of dihydroorotate to orotate with quinone as electron acceptor. The chain is Dihydroorotate dehydrogenase (quinone) from Stenotrophomonas maltophilia (strain K279a).